The chain runs to 901 residues: Glutamate receptor 2.1 (901 aa).

The first 25 residues, 1–25 (MKRENNLVLSLLFFVIVFLMQVGEA), serve as a signal peptide directing secretion. The Extracellular segment spans residues 26–574 (QNRITNVNVG…SSTIFLMPLT (549 aa)). 9 N-linked (GlcNAc...) asparagine glycosylation sites follow: asparagine 46, asparagine 53, asparagine 204, asparagine 267, asparagine 331, asparagine 342, asparagine 461, asparagine 477, and asparagine 536. Residues 575-595 (LALWLISLLSFFIIGLVVWVL) form a helical membrane-spanning segment. Topologically, residues 596–604 (EHRVNPDFD) are cytoplasmic. The helical transmembrane segment at 605–625 (GPGQYQLSTIFWFSFSIMVFA) threads the bilayer. Residues 626–629 (PRER) are Cytoplasmic-facing. The helical transmembrane segment at 630–650 (VLSFWARVVVIIWYFLVLVLT) threads the bilayer. Residues 651–823 (QSYTASLASL…VSFRQLGFDS (173 aa)) are Extracellular-facing. A helical transmembrane segment spans residues 824-844 (FWVLFLVAAIVCTMALLKFVY). At 845–901 (QFLKENPNQRNLRVLWEKFNEPDQKSYIKDVTKCQCSSGQGMPKNGQEGANAVNNGN) the chain is on the cytoplasmic side.

It belongs to the glutamate-gated ion channel (TC 1.A.10.1) family. In terms of assembly, may form heteromers. In terms of tissue distribution, expressed predominantly in roots. First strongly detected in all cell types of the root except at the apex. Later expressed at the root-shoot junction.

It localises to the membrane. Functionally, glutamate-gated receptor that probably acts as a non-selective cation channel. May be involved in light-signal transduction and calcium homeostasis via the regulation of calcium influx into cells. The polypeptide is Glutamate receptor 2.1 (GLR2.1) (Arabidopsis thaliana (Mouse-ear cress)).